We begin with the raw amino-acid sequence, 290 residues long: Acetyl-coenzyme A carboxylase carboxyl transferase subunit beta (290 aa).

The CoA carboxyltransferase N-terminal domain occupies 30 to 290; sequence IMTKCPKCKK…HAGQEVNKDA (261 aa). Zn(2+) contacts are provided by cysteine 34, cysteine 37, cysteine 53, and cysteine 56. The segment at 34 to 56 adopts a C4-type zinc-finger fold; it reads CPKCKKIMYTKELSENLNVCFNC.

The protein belongs to the AccD/PCCB family. In terms of assembly, acetyl-CoA carboxylase is a heterohexamer composed of biotin carboxyl carrier protein (AccB), biotin carboxylase (AccC) and two subunits each of ACCase subunit alpha (AccA) and ACCase subunit beta (AccD). Zn(2+) serves as cofactor.

The protein localises to the cytoplasm. It catalyses the reaction N(6)-carboxybiotinyl-L-lysyl-[protein] + acetyl-CoA = N(6)-biotinyl-L-lysyl-[protein] + malonyl-CoA. The protein operates within lipid metabolism; malonyl-CoA biosynthesis; malonyl-CoA from acetyl-CoA: step 1/1. Its function is as follows. Component of the acetyl coenzyme A carboxylase (ACC) complex. Biotin carboxylase (BC) catalyzes the carboxylation of biotin on its carrier protein (BCCP) and then the CO(2) group is transferred by the transcarboxylase to acetyl-CoA to form malonyl-CoA. In Staphylococcus carnosus (strain TM300), this protein is Acetyl-coenzyme A carboxylase carboxyl transferase subunit beta.